Consider the following 407-residue polypeptide: MVLRVAVVGGGPAGSSAAEILVKAGIETYLFERKLDNAKPCGGAIPLCMVDEFDLPPEIIDRRVRKMKMISPSNIEVNIGQTLKDDEYIGMCRREVLDGFLRERAEKLGTKVINGTVYKLDIPSKDSDPYTLHYADHSVGGTTGEMKILKVDVVIGADGANSRIAKAIDAGDYNYAIAFQERIRLPEDKMAYYDELAEMYVGDDVSPDFYAWVFPKYDHVAVGTGTMKVNKARIKDLQAGIRTRAAKKLEGGEIIKVEAHPIPEHPRPRRVVGRVALVGDAAGTVTKSSGEGIYFAAKSARMCAETIVATSNNGQRVPTEADLKQYIKQWDKRYGATYLVLDILQRVFYRTDATREAFVEMCSDIDVQKLTFDSYLYKTVVPANPLVQMKITAKTIGSLLRGNALAP.

Belongs to the geranylgeranyl reductase family. ChlP subfamily.

It carries out the reaction phytyl diphosphate + 3 NADP(+) = geranylgeranyl diphosphate + 3 NADPH + 3 H(+). It functions in the pathway porphyrin-containing compound metabolism; chlorophyll biosynthesis. Catalyzes the stepwise hydrogenation of geranylgeraniol to phytol during chlorophyll A (ChlA) biosynthesis. The protein is Geranylgeranyl diphosphate reductase (chlP) of Synechocystis sp. (strain ATCC 27184 / PCC 6803 / Kazusa).